Consider the following 447-residue polypeptide: Adenylosuccinate synthetase (447 aa).

GTP contacts are provided by residues 12–18 (GDEGKGK) and 40–42 (GHT). Aspartate 13 acts as the Proton acceptor in catalysis. Mg(2+) contacts are provided by aspartate 13 and glycine 40. IMP is bound by residues 13–16 (DEGK), 38–41 (NAGH), threonine 128, arginine 142, glutamine 223, threonine 238, and arginine 302. Histidine 41 acts as the Proton donor in catalysis. Position 298 to 304 (298 to 304 (TTTGRKR)) interacts with substrate. GTP is bound by residues arginine 304, 330 to 332 (KLD), and 412 to 414 (SLG).

This sequence belongs to the adenylosuccinate synthetase family. As to quaternary structure, homodimer. Mg(2+) is required as a cofactor.

The protein localises to the cytoplasm. It carries out the reaction IMP + L-aspartate + GTP = N(6)-(1,2-dicarboxyethyl)-AMP + GDP + phosphate + 2 H(+). Its pathway is purine metabolism; AMP biosynthesis via de novo pathway; AMP from IMP: step 1/2. Plays an important role in the de novo pathway of purine nucleotide biosynthesis. Catalyzes the first committed step in the biosynthesis of AMP from IMP. In Nostoc sp. (strain PCC 7120 / SAG 25.82 / UTEX 2576), this protein is Adenylosuccinate synthetase.